Consider the following 531-residue polypeptide: Apolipoprotein N-acyltransferase (531 aa).

7 helical membrane-spanning segments follow: residues 8-28 (IILLSGASRAFVGFLAGLLAM), 34-54 (FGIFAAAFISFPMLVWLIDGV), 74-94 (WSFGFGYFLGGLWWLGNAFLV), 105-125 (LAVVGLPAVLALFYALAVLVA), 128-148 (LWSDGVGRIAALAVGFGVAEW), 178-198 (VLNVATINMLAVFVFAAPALI), and 206-226 (VGLAVAAALFAAHIGYGYYRL). Residues 243 to 493 (VQPVIDQAKK…KGVTDAILPG (251 aa)) enclose the CN hydrolase domain. E287 acts as the Proton acceptor in catalysis. K351 is an active-site residue. C405 functions as the Nucleophile in the catalytic mechanism. A helical transmembrane segment spans residues 501–521 (SMLRGRIFWFTGVFLLLVAAI).

Belongs to the CN hydrolase family. Apolipoprotein N-acyltransferase subfamily.

Its subcellular location is the cell inner membrane. It catalyses the reaction N-terminal S-1,2-diacyl-sn-glyceryl-L-cysteinyl-[lipoprotein] + a glycerophospholipid = N-acyl-S-1,2-diacyl-sn-glyceryl-L-cysteinyl-[lipoprotein] + a 2-acyl-sn-glycero-3-phospholipid + H(+). The protein operates within protein modification; lipoprotein biosynthesis (N-acyl transfer). Its function is as follows. Catalyzes the phospholipid dependent N-acylation of the N-terminal cysteine of apolipoprotein, the last step in lipoprotein maturation. The chain is Apolipoprotein N-acyltransferase from Sinorhizobium fredii (strain NBRC 101917 / NGR234).